Here is a 334-residue protein sequence, read N- to C-terminus: Ornithine carbamoyltransferase (334 aa).

Carbamoyl phosphate-binding positions include 56-59, Q83, R107, and 134-137; these read STRT and HPTQ. Residues N168, D232, and 236–237 contribute to the L-ornithine site; that span reads SM. Residues 274–275 and R320 contribute to the carbamoyl phosphate site; that span reads CL.

Belongs to the aspartate/ornithine carbamoyltransferase superfamily. OTCase family.

The protein resides in the cytoplasm. It carries out the reaction carbamoyl phosphate + L-ornithine = L-citrulline + phosphate + H(+). It participates in amino-acid biosynthesis; L-arginine biosynthesis; L-arginine from L-ornithine and carbamoyl phosphate: step 1/3. Reversibly catalyzes the transfer of the carbamoyl group from carbamoyl phosphate (CP) to the N(epsilon) atom of ornithine (ORN) to produce L-citrulline. The sequence is that of Ornithine carbamoyltransferase from Shigella dysenteriae serotype 1 (strain Sd197).